The chain runs to 232 residues: Flagellar L-ring protein (232 aa).

Positions 1–21 (MQKNAAHTYAISSLLVLSLTG) are cleaved as a signal peptide. Residue Cys-22 is the site of N-palmitoyl cysteine attachment. Residue Cys-22 is the site of S-diacylglycerol cysteine attachment.

This sequence belongs to the FlgH family. The basal body constitutes a major portion of the flagellar organelle and consists of four rings (L,P,S, and M) mounted on a central rod.

It is found in the cell outer membrane. The protein localises to the bacterial flagellum basal body. Its function is as follows. Assembles around the rod to form the L-ring and probably protects the motor/basal body from shearing forces during rotation. The polypeptide is Flagellar L-ring protein (Escherichia coli O7:K1 (strain IAI39 / ExPEC)).